Consider the following 295-residue polypeptide: Serpentine receptor class gamma-53 (295 aa).

6 consecutive transmembrane segments (helical) span residues 7–27, 39–61, 121–141, 173–193, 211–230, and 241–261; these read IWLC…VLLS, VITM…RMVF, FYLL…QLLY, CFMS…LYQV, MSLI…AWQT, and IELL…ILLI.

It belongs to the nematode receptor-like protein srg family.

It is found in the membrane. The protein is Serpentine receptor class gamma-53 (srg-53) of Caenorhabditis elegans.